The sequence spans 116 residues: UPF0329 protein ECU05_1650 (116 aa).

This sequence belongs to the UPF0329 family.

The sequence is that of UPF0329 protein ECU05_1650 from Encephalitozoon cuniculi (strain GB-M1) (Microsporidian parasite).